The sequence spans 67 residues: Large ribosomal subunit protein bL31 (67 aa).

Residues Cys16, Cys18, Cys36, and Cys39 each contribute to the Zn(2+) site.

The protein belongs to the bacterial ribosomal protein bL31 family. Type A subfamily. In terms of assembly, part of the 50S ribosomal subunit. Zn(2+) serves as cofactor.

In terms of biological role, binds the 23S rRNA. The chain is Large ribosomal subunit protein bL31 from Aliarcobacter butzleri (strain RM4018) (Arcobacter butzleri).